We begin with the raw amino-acid sequence, 476 residues long: Growth/differentiation factor 10 (476 aa).

The N-terminal stretch at 1 to 29 (MAPGPARISLGSQLLPMVPLLLLLRGAGC) is a signal peptide. Positions 30-366 (GHRGPSWSSL…EKTMQKARRR (337 aa)) are excised as a propeptide. The disordered stretch occupies residues 39-63 (LPSAAAGLQGDRDSQQSPGDAAAAL). 3 N-linked (GlcNAc...) asparagine glycosylation sites follow: Asn114, Asn152, and Asn277. The interval 268 to 301 (GDFEPGAAPNSSADPRVRRAAQVSKPLQDNELPG) is disordered. Intrachain disulfides connect Cys374–Cys441, Cys403–Cys473, and Cys407–Cys475. Asn467 carries N-linked (GlcNAc...) asparagine glycosylation.

Belongs to the TGF-beta family. In terms of assembly, homodimer or heterodimer. Can form a non-covalent complex of the mature region and the pro-region. In terms of tissue distribution, highly expressed in epididymal adipose tissue, brain, bone and aorta and to a lesser extent in liver and spleen. Expressed at higher levels in preadipocytes than in mature adipocytes. Strongly expressed in glial cells of the cerebellum.

The protein localises to the secreted. Functionally, growth factor involved in osteogenesis and adipogenesis. Plays an inhibitory role in the process of osteoblast differentiation via SMAD2/3 pathway. Plays an inhibitory role in the process of adipogenesis. This chain is Growth/differentiation factor 10, found in Mus musculus (Mouse).